The sequence spans 321 residues: MIFVYALLALVITFVLVPVLIPTLKRMKFGQSIREEGPQSHMKKTGTPTMGGLTFLLSIVITSLVAIIFVEQANPIILLLFVTIGFGLIGFIDDYIIVVKKNNQGLTSKQKFLAQIGIAIIFFVLSNVFHLVNFSTSIHIPFTNVAIPLSFAYVIFIVFLQVGFSNAVNLTDGLDGLATGLSIIGFTMYAIMSFVLGETAIGIFCIIMLFALLGFLPYNINPAKVFMGDTGSLALGGIFATISIMLNQELSLIFIGLVFVIETLSVMLQVASFKLTGKRIFKMSPIHHHFELIGWSEWKVVTVFWAVGLISGLIGLWIGVH.

The next 10 membrane-spanning stretches (helical) occupy residues 1 to 21 (MIFVYALLALVITFVLVPVLI), 50 to 70 (MGGLTFLLSIVITSLVAIIFV), 76 to 96 (IILLLFVTIGFGLIGFIDDYI), 112 to 132 (FLAQIGIAIIFFVLSNVFHLV), 140 to 160 (IPFTNVAIPLSFAYVIFIVFL), 176 to 196 (GLATGLSIIGFTMYAIMSFVL), 200 to 220 (AIGIFCIIMLFALLGFLPYNI), 225 to 245 (VFMGDTGSLALGGIFATISIM), 250 to 270 (LSLIFIGLVFVIETLSVMLQV), and 300 to 320 (VVTVFWAVGLISGLIGLWIGV).

This sequence belongs to the glycosyltransferase 4 family. MraY subfamily. Mg(2+) is required as a cofactor.

It is found in the cell membrane. The enzyme catalyses UDP-N-acetyl-alpha-D-muramoyl-L-alanyl-gamma-D-glutamyl-L-lysyl-D-alanyl-D-alanine + di-trans,octa-cis-undecaprenyl phosphate = Mur2Ac(oyl-L-Ala-gamma-D-Glu-L-Lys-D-Ala-D-Ala)-di-trans,octa-cis-undecaprenyl diphosphate + UMP. The protein operates within cell wall biogenesis; peptidoglycan biosynthesis. Its function is as follows. Catalyzes the initial step of the lipid cycle reactions in the biosynthesis of the cell wall peptidoglycan: transfers peptidoglycan precursor phospho-MurNAc-pentapeptide from UDP-MurNAc-pentapeptide onto the lipid carrier undecaprenyl phosphate, yielding undecaprenyl-pyrophosphoryl-MurNAc-pentapeptide, known as lipid I. The chain is Phospho-N-acetylmuramoyl-pentapeptide-transferase from Staphylococcus aureus (strain bovine RF122 / ET3-1).